Reading from the N-terminus, the 247-residue chain is Triosephosphate isomerase (247 aa).

Residue 9–11 coordinates substrate; the sequence is NWK. His-94 acts as the Electrophile in catalysis. Glu-166 acts as the Proton acceptor in catalysis. Substrate-binding positions include Gly-172, Ser-211, and 232-233; that span reads GG.

This sequence belongs to the triosephosphate isomerase family. In terms of assembly, homodimer.

The protein resides in the cytoplasm. The catalysed reaction is D-glyceraldehyde 3-phosphate = dihydroxyacetone phosphate. It participates in carbohydrate biosynthesis; gluconeogenesis. Its pathway is carbohydrate degradation; glycolysis; D-glyceraldehyde 3-phosphate from glycerone phosphate: step 1/1. In terms of biological role, involved in the gluconeogenesis. Catalyzes stereospecifically the conversion of dihydroxyacetone phosphate (DHAP) to D-glyceraldehyde-3-phosphate (G3P). In Cupriavidus taiwanensis (strain DSM 17343 / BCRC 17206 / CCUG 44338 / CIP 107171 / LMG 19424 / R1) (Ralstonia taiwanensis (strain LMG 19424)), this protein is Triosephosphate isomerase.